The primary structure comprises 495 residues: Histidine--tRNA ligase (495 aa).

Residues 1-10 show a composition bias toward polar residues; the sequence is MTTDSEQPNT. The disordered stretch occupies residues 1–24; sequence MTTDSEQPNTDFRPEARAPRGFAD. Over residues 12-24 the composition is skewed to basic and acidic residues; the sequence is FRPEARAPRGFAD.

It belongs to the class-II aminoacyl-tRNA synthetase family. Homodimer.

It is found in the cytoplasm. It carries out the reaction tRNA(His) + L-histidine + ATP = L-histidyl-tRNA(His) + AMP + diphosphate + H(+). This is Histidine--tRNA ligase (hisS) from Caulobacter vibrioides (strain ATCC 19089 / CIP 103742 / CB 15) (Caulobacter crescentus).